Reading from the N-terminus, the 145-residue chain is Lipoprotein signal peptidase (145 aa).

Helical transmembrane passes span 1-21 (MVYIVVLIVILLDQMVKLLVM), 57-77 (YLFIVITVVVISFLLIYYYKT), and 79-99 (GSGMVTLSTGLIIGGALGNLI). Residues Asp109 and Asp123 contribute to the active site. Residues 115 to 135 (IWPVFNLADSSVVIGAALLIL) traverse the membrane as a helical segment.

The protein belongs to the peptidase A8 family.

The protein localises to the cell inner membrane. The enzyme catalyses Release of signal peptides from bacterial membrane prolipoproteins. Hydrolyzes -Xaa-Yaa-Zaa-|-(S,diacylglyceryl)Cys-, in which Xaa is hydrophobic (preferably Leu), and Yaa (Ala or Ser) and Zaa (Gly or Ala) have small, neutral side chains.. Its pathway is protein modification; lipoprotein biosynthesis (signal peptide cleavage). Functionally, this protein specifically catalyzes the removal of signal peptides from prolipoproteins. The sequence is that of Lipoprotein signal peptidase from Halothermothrix orenii (strain H 168 / OCM 544 / DSM 9562).